We begin with the raw amino-acid sequence, 121 residues long: Putative viral protein-binding protein C1 (121 aa).

Positions 21 to 57 (PWDRTRGHPDVPWRNLTSSPTRPLAQPAGSCMPAEPS) are disordered.

In terms of assembly, interacts with core protein of hepatitis B virus.

The sequence is that of Putative viral protein-binding protein C1 from Homo sapiens (Human).